Consider the following 302-residue polypeptide: Taste receptor type 2 member 104 (302 aa).

Over 1–7 (MLSMLES) the chain is Extracellular. A helical membrane pass occupies residues 8–28 (ILLSVATSEAMLGILGNIFIV). The Cytoplasmic portion of the chain corresponds to 29–43 (LVNCTNWVRNKKLSK). Residues 44–64 (INFILTGLAISRVFTIWIITL) form a helical membrane-spanning segment. The Extracellular segment spans residues 65-87 (DAYTKVFFLTTLMPSNLHECISY). Residues 88-108 (IWVIINHLSVWFATSLSIFYF) traverse the membrane as a helical segment. Residues 109 to 128 (LKIANFSHYIFLWLKRRADK) lie on the Cytoplasmic side of the membrane. Residues 129-149 (VFVFLIGYLIITWLASFPLAV) form a helical membrane-spanning segment. Residues 150–182 (TVIKNIKVHHNNTSWLIQLEKRELLINYVFANM) are Extracellular-facing. 2 N-linked (GlcNAc...) asparagine glycosylation sites follow: Asn-160 and Asn-161. A helical transmembrane segment spans residues 183–203 (GPISLFMVAVFTCFLLTISLW). The Cytoplasmic segment spans residues 204 to 233 (RHRRRMQSTGSKFRDLNTEVHVKAMKVLIS). The helical transmembrane segment at 234 to 254 (FIILFILYFMGVLIETLCLFL) threads the bilayer. Residues 255 to 257 (TEN) are Extracellular-facing. A helical transmembrane segment spans residues 258-278 (ILLFIFGFTLSSTYPCCHSFI). The Cytoplasmic segment spans residues 279 to 302 (LILTSRELKQASMRALQRLKCCET).

This sequence belongs to the G-protein coupled receptor T2R family.

It is found in the membrane. Functionally, putative taste receptor which may play a role in the perception of bitterness. In Rattus norvegicus (Rat), this protein is Taste receptor type 2 member 104.